The primary structure comprises 216 residues: Phosphoenolpyruvate guanylyltransferase (216 aa).

Phosphoenolpyruvate is bound by residues Thr-150, Gly-165, and Ser-168.

This sequence belongs to the CofC family.

It carries out the reaction phosphoenolpyruvate + GTP + H(+) = enolpyruvoyl-2-diphospho-5'-guanosine + diphosphate. Its pathway is cofactor biosynthesis; coenzyme F420 biosynthesis. Functionally, guanylyltransferase that catalyzes the activation of phosphoenolpyruvate (PEP) as enolpyruvoyl-2-diphospho-5'-guanosine, via the condensation of PEP with GTP. It is involved in the biosynthesis of coenzyme F420, a hydride carrier cofactor. The protein is Phosphoenolpyruvate guanylyltransferase of Mycobacterium leprae (strain Br4923).